Consider the following 89-residue polypeptide: OMEGA-ectatommitoxin(02)-Rm1a (89 aa).

An N-terminal signal peptide occupies residues 1–30 (MKDSYISIVIAYLMVTFILVSSMPIEGEKG). Disulfide bonds link cysteine 39–cysteine 52, cysteine 47–cysteine 68, and cysteine 70–cysteine 79. Residues 43–80 (YANYCFNGKCVHVVAQDEPGKPCYSCICDKFYIGKRCG) form the EGF-like domain.

The protein belongs to the EGF domain peptide family. In terms of tissue distribution, expressed by the venom gland.

It is found in the secreted. Functionally, ant peptide with probable defensive activity which acts as a potent agonist of the mammalian epidermal growth factor receptor (EGFR). Mimics, both structurally and functionally, vertebrate epidermal growth factor (EGF) peptide hormones. In vivo, intraplantar injection in mice causes long-lasting (several days) hypersensitivity of the injected paw to both mechanical and thermal stimuli. Its long-lasting effect is unusual for venom toxins whose effects are usually immediate. One possible explanation is that it would reduce the duration of a nest attack, discourage future attacks, or enhance the actions of subsequent exposure to other pain-inducing venom peptides. This chain is OMEGA-ectatommitoxin(02)-Rm1a, found in Rhytidoponera metallica (Australian green-headed ant).